The primary structure comprises 399 residues: Nicotinate phosphoribosyltransferase (399 aa).

His217 is subject to Phosphohistidine; by autocatalysis.

It belongs to the NAPRTase family. Transiently phosphorylated on a His residue during the reaction cycle. Phosphorylation strongly increases the affinity for substrates and increases the rate of nicotinate D-ribonucleotide production. Dephosphorylation regenerates the low-affinity form of the enzyme, leading to product release.

It carries out the reaction nicotinate + 5-phospho-alpha-D-ribose 1-diphosphate + ATP + H2O = nicotinate beta-D-ribonucleotide + ADP + phosphate + diphosphate. It functions in the pathway cofactor biosynthesis; NAD(+) biosynthesis; nicotinate D-ribonucleotide from nicotinate: step 1/1. Catalyzes the synthesis of beta-nicotinate D-ribonucleotide from nicotinate and 5-phospho-D-ribose 1-phosphate at the expense of ATP. The chain is Nicotinate phosphoribosyltransferase from Burkholderia ambifaria (strain MC40-6).